The following is a 118-amino-acid chain: Putative pterin-4-alpha-carbinolamine dehydratase (118 aa).

Belongs to the pterin-4-alpha-carbinolamine dehydratase family.

It catalyses the reaction (4aS,6R)-4a-hydroxy-L-erythro-5,6,7,8-tetrahydrobiopterin = (6R)-L-erythro-6,7-dihydrobiopterin + H2O. This Xanthomonas oryzae pv. oryzae (strain MAFF 311018) protein is Putative pterin-4-alpha-carbinolamine dehydratase.